We begin with the raw amino-acid sequence, 197 residues long: Holliday junction branch migration complex subunit RuvA (197 aa).

The interval 1-65 (MISQVRGTIM…EDAWHLYGFA (65 aa)) is domain I. The domain II stretch occupies residues 66–140 (HAYERAVFQK…DKIDAVGPAP (75 aa)). The interval 140–144 (PATGT) is flexible linker. The domain III stretch occupies residues 145–197 (APSPLGDDAVRALIALGYNQTEADRAVRAVVESGAPKDVSSLVRGALSRLTAK).

This sequence belongs to the RuvA family. As to quaternary structure, homotetramer. Forms an RuvA(8)-RuvB(12)-Holliday junction (HJ) complex. HJ DNA is sandwiched between 2 RuvA tetramers; dsDNA enters through RuvA and exits via RuvB. An RuvB hexamer assembles on each DNA strand where it exits the tetramer. Each RuvB hexamer is contacted by two RuvA subunits (via domain III) on 2 adjacent RuvB subunits; this complex drives branch migration. In the full resolvosome a probable DNA-RuvA(4)-RuvB(12)-RuvC(2) complex forms which resolves the HJ.

Its subcellular location is the cytoplasm. Functionally, the RuvA-RuvB-RuvC complex processes Holliday junction (HJ) DNA during genetic recombination and DNA repair, while the RuvA-RuvB complex plays an important role in the rescue of blocked DNA replication forks via replication fork reversal (RFR). RuvA specifically binds to HJ cruciform DNA, conferring on it an open structure. The RuvB hexamer acts as an ATP-dependent pump, pulling dsDNA into and through the RuvAB complex. HJ branch migration allows RuvC to scan DNA until it finds its consensus sequence, where it cleaves and resolves the cruciform DNA. This is Holliday junction branch migration complex subunit RuvA from Gemmatimonas aurantiaca (strain DSM 14586 / JCM 11422 / NBRC 100505 / T-27).